The chain runs to 211 residues: Stromal cell-derived factor 2 (211 aa).

Positions 1 to 18 (MAVVPLLLLGGLWSAVGA) are cleaved as a signal peptide. 3 consecutive MIR domains span residues 21–75 (LGVV…IRGK), 83–138 (GTPI…VLCN), and 139–193 (GPYW…AMEG).

The protein resides in the secreted. The polypeptide is Stromal cell-derived factor 2 (SDF2) (Homo sapiens (Human)).